The chain runs to 117 residues: Probable non-functional immunoglobulin kappa variable 1D-42 (117 aa).

The first 22 residues, 1–22 (MDMRVPAQLLGLLLLWLPGVRF), serve as a signal peptide directing secretion. The tract at residues 23–45 (DIQMTQSPSFLSASVGDRVSIIC) is framework-1. In terms of domain architecture, Ig-like spans 23 to 117 (DIQMTQSPSF…YYCKQDFSYP (95 aa)). Cysteines 45 and 110 form a disulfide. A complementarity-determining-1 region spans residues 46 to 56 (WASEGISSNLA). Residues 57 to 71 (WYLQKPGKSPKLFLY) form a framework-2 region. Positions 72–78 (DAKDLHP) are complementarity-determining-2. The framework-3 stretch occupies residues 79 to 110 (GVSSRFSGRGSGTDFTLTIISLKPEDFAAYYC). The segment at 111–117 (KQDFSYP) is complementarity-determining-3.

Immunoglobulins are composed of two identical heavy chains and two identical light chains; disulfide-linked.

It is found in the secreted. Its subcellular location is the cell membrane. In terms of biological role, probable non-functional open reading frame (ORF) of V region of the variable domain of immunoglobulin light chains. Non-functional ORF generally cannot participate in the synthesis of a productive immunoglobulin chain due to altered V-(D)-J or switch recombination and/or splicing site (at mRNA level) and/or conserved amino acid change (protein level). Immunoglobulins, also known as antibodies, are membrane-bound or secreted glycoproteins produced by B lymphocytes. In the recognition phase of humoral immunity, the membrane-bound immunoglobulins serve as receptors which, upon binding of a specific antigen, trigger the clonal expansion and differentiation of B lymphocytes into immunoglobulins-secreting plasma cells. Secreted immunoglobulins mediate the effector phase of humoral immunity, which results in the elimination of bound antigens. The antigen binding site is formed by the variable domain of one heavy chain, together with that of its associated light chain. Thus, each immunoglobulin has two antigen binding sites with remarkable affinity for a particular antigen. The variable domains are assembled by a process called V-(D)-J rearrangement and can then be subjected to somatic hypermutations which, after exposure to antigen and selection, allow affinity maturation for a particular antigen. The protein is Probable non-functional immunoglobulin kappa variable 1D-42 of Homo sapiens (Human).